The primary structure comprises 193 residues: Peptidyl-tRNA hydrolase (193 aa).

TRNA is bound at residue Tyr-16. The active-site Proton acceptor is His-21. 3 residues coordinate tRNA: Phe-67, Asn-69, and Asn-115.

This sequence belongs to the PTH family. Monomer.

It localises to the cytoplasm. It carries out the reaction an N-acyl-L-alpha-aminoacyl-tRNA + H2O = an N-acyl-L-amino acid + a tRNA + H(+). Its function is as follows. Hydrolyzes ribosome-free peptidyl-tRNAs (with 1 or more amino acids incorporated), which drop off the ribosome during protein synthesis, or as a result of ribosome stalling. Catalyzes the release of premature peptidyl moieties from peptidyl-tRNA molecules trapped in stalled 50S ribosomal subunits, and thus maintains levels of free tRNAs and 50S ribosomes. The polypeptide is Peptidyl-tRNA hydrolase (Vesicomyosocius okutanii subsp. Calyptogena okutanii (strain HA)).